Consider the following 333-residue polypeptide: Probable siderophore transport system permease protein YfiZ (333 aa).

The first 31 residues, 1–31 (MICKKASSKWIVLVCLIFILLTAVCASVVYG), serve as a signal peptide directing secretion. Helical transmembrane passes span 64 to 84 (ALVA…MQAL), 94 to 114 (IFGI…FLHI), 119 to 139 (ALVW…YAAG), 152 to 172 (TLAG…LLSV), 193 to 213 (LDLL…CFFL), 246 to 266 (VMLA…GIII), 280 to 300 (WVLP…DIGA), and 303 to 323 (IIMP…MPVF).

It belongs to the binding-protein-dependent transport system permease family. FecCD subfamily. In terms of assembly, the complex is composed of one ATP-binding protein (YusV), two transmembrane proteins (YfiZ and YfhA) and a solute-binding protein (YfiY).

The protein localises to the cell membrane. Part of the ABC transporter complex YfiYZ/YfhA/YusV involved in import of the iron-hydroxamate siderophores schizokinen, arthrobactin and corprogen. The chain is Probable siderophore transport system permease protein YfiZ (yfiZ) from Bacillus subtilis (strain 168).